The sequence spans 500 residues: Intermediate filament protein ifc-1 (500 aa).

The segment at 1 to 36 is head; it reads MSLYGGIPTNLVSGMSSAGAICTTQIRDAREREKRE. One can recognise an IF rod domain in the interval 33–383; that stretch reads EKREIGLLND…VLLNGANVTT (351 aa). Residues 37 to 68 are coil 1A; that stretch reads IGLLNDRLADYIEKVRFLKAQNHVLSHDIEIL. Residues 69-81 are linker 1; it reads RRGFSGGGHISSF. Residues 82 to 219 are coil 1B; that stretch reads FESEISNCTV…TENSSRIEQE (138 aa). A linker 12 region spans residues 220 to 237; that stretch reads LIYIHRDTTLENRDYFRQ. Residues 238-383 form a coil 2 region; the sequence is ELQAAMRDIR…VLLNGANVTT (146 aa). Residues 384–496 form a tail region; it reads YVSNSTGAAG…RHHESSYSYS (113 aa).

It belongs to the intermediate filament family.

It is found in the cytoplasm. In terms of biological role, cytoplasmic intermediate filaments provide mechanical strength to cells. Not essential protein. The protein is Intermediate filament protein ifc-1 (ifc-1) of Caenorhabditis elegans.